The following is a 386-amino-acid chain: Synaptotagmin-5 (386 aa).

Positions 1 to 16 (MFPEPPTLGSPAPKTP) are enriched in pro residues. Residues 1-21 (MFPEPPTLGSPAPKTPPDSSR) are disordered. At 1–24 (MFPEPPTLGSPAPKTPPDSSRIRQ) the chain is on the vesicular side. The chain crosses the membrane as a helical span at residues 25-45 (GAVPAWVLATIVLGSGLLVFS). Over 46–386 (SCFCLYRKRC…PDRARPIPAP (341 aa)) the chain is Cytoplasmic. 2 C2 domains span residues 108-227 (QLGR…QAWR) and 239-372 (KLGD…AQWH). L138, D139, D145, D197, F198, D199, S202, D205, D270, D276, D330, and D332 together coordinate Ca(2+).

The protein belongs to the synaptotagmin family. In terms of assembly, homodimer. Interacts with both alpha- and beta-tubulin. It depends on Ca(2+) as a cofactor.

The protein localises to the cytoplasmic vesicle. The protein resides in the secretory vesicle. It is found in the synaptic vesicle membrane. It localises to the recycling endosome membrane. In terms of biological role, may be involved in Ca(2+)-dependent exocytosis of secretory vesicles through Ca(2+) and phospholipid binding to the C2 domain or may serve as Ca(2+) sensors in the process of vesicular trafficking and exocytosis. Regulates the Ca(2+)-dependent secretion of norepinephrine in PC12 cells. Required for export from the endocytic recycling compartment to the cell surface. This is Synaptotagmin-5 (Syt5) from Mus musculus (Mouse).